We begin with the raw amino-acid sequence, 203 residues long: Probable proteasome subunit beta type-4 (203 aa).

Belongs to the peptidase T1B family. The 26S proteasome consists of a 20S proteasome core and two 19S regulatory subunits. The 20S proteasome core is composed of 28 subunits that are arranged in four stacked rings, resulting in a barrel-shaped structure. The two end rings are each formed by seven alpha subunits, and the two central rings are each formed by seven beta subunits. The catalytic chamber with the active sites is on the inside of the barrel.

The protein localises to the cytoplasm. The protein resides in the nucleus. Its function is as follows. Non-catalytic component of the proteasome, a multicatalytic proteinase complex which is characterized by its ability to cleave peptides with Arg, Phe, Tyr, Leu, and Glu adjacent to the leaving group at neutral or slightly basic pH. The proteasome has an ATP-dependent proteolytic activity. The chain is Probable proteasome subunit beta type-4 (pcb-4) from Neurospora crassa (strain ATCC 24698 / 74-OR23-1A / CBS 708.71 / DSM 1257 / FGSC 987).